Consider the following 268-residue polypeptide: uncharacterized protein (268 aa).

The stretch at 132–159 (DELDEKIIEFDTKMNEILEELLEDVEVE) forms a coiled coil.

This is an uncharacterized protein from Methanocaldococcus jannaschii (strain ATCC 43067 / DSM 2661 / JAL-1 / JCM 10045 / NBRC 100440) (Methanococcus jannaschii).